Reading from the N-terminus, the 366-residue chain is tRNA-specific 2-thiouridylase MnmA (366 aa).

ATP-binding positions include 10–17 (GLSGGVDS) and Met36. The interaction with target base in tRNA stretch occupies residues 96-98 (NPD). Cys101 acts as the Nucleophile in catalysis. Residues Cys101 and Cys197 are joined by a disulfide bond. An ATP-binding site is contributed by Gly125. The interaction with tRNA stretch occupies residues 147 to 149 (KDQ). Catalysis depends on Cys197, which acts as the Cysteine persulfide intermediate. Positions 309 to 310 (RY) are interaction with tRNA.

It belongs to the MnmA/TRMU family.

It localises to the cytoplasm. It carries out the reaction S-sulfanyl-L-cysteinyl-[protein] + uridine(34) in tRNA + AH2 + ATP = 2-thiouridine(34) in tRNA + L-cysteinyl-[protein] + A + AMP + diphosphate + H(+). In terms of biological role, catalyzes the 2-thiolation of uridine at the wobble position (U34) of tRNA, leading to the formation of s(2)U34. The sequence is that of tRNA-specific 2-thiouridylase MnmA from Alkalilimnicola ehrlichii (strain ATCC BAA-1101 / DSM 17681 / MLHE-1).